Here is a 249-residue protein sequence, read N- to C-terminus: tRNA (guanine-N(1)-)-methyltransferase (249 aa).

S-adenosyl-L-methionine is bound by residues Gly-113 and Val-133–Leu-138.

This sequence belongs to the RNA methyltransferase TrmD family. As to quaternary structure, homodimer.

The protein resides in the cytoplasm. It carries out the reaction guanosine(37) in tRNA + S-adenosyl-L-methionine = N(1)-methylguanosine(37) in tRNA + S-adenosyl-L-homocysteine + H(+). In terms of biological role, specifically methylates guanosine-37 in various tRNAs. This is tRNA (guanine-N(1)-)-methyltransferase from Tolumonas auensis (strain DSM 9187 / NBRC 110442 / TA 4).